The sequence spans 154 residues: Xanthine-guanine phosphoribosyltransferase (154 aa).

5-phospho-alpha-D-ribose 1-diphosphate-binding positions include 37 to 38 (RG), Arg-69, and 88 to 96 (DDLVDSGDT). Position 69 (Arg-69) interacts with GMP. Asp-89 is a Mg(2+) binding site. Residues Asp-92 and Ile-135 each coordinate guanine. Xanthine contacts are provided by Asp-92 and Ile-135. GMP-binding positions include 92-96 (DSGDT) and 134-135 (WI).

The protein belongs to the purine/pyrimidine phosphoribosyltransferase family. XGPT subfamily. Homotetramer. Requires Mg(2+) as cofactor.

The protein resides in the cell inner membrane. The catalysed reaction is GMP + diphosphate = guanine + 5-phospho-alpha-D-ribose 1-diphosphate. It carries out the reaction XMP + diphosphate = xanthine + 5-phospho-alpha-D-ribose 1-diphosphate. The enzyme catalyses IMP + diphosphate = hypoxanthine + 5-phospho-alpha-D-ribose 1-diphosphate. It participates in purine metabolism; GMP biosynthesis via salvage pathway; GMP from guanine: step 1/1. It functions in the pathway purine metabolism; XMP biosynthesis via salvage pathway; XMP from xanthine: step 1/1. Purine salvage pathway enzyme that catalyzes the transfer of the ribosyl-5-phosphate group from 5-phospho-alpha-D-ribose 1-diphosphate (PRPP) to the N9 position of the 6-oxopurines guanine and xanthine to form the corresponding ribonucleotides GMP (guanosine 5'-monophosphate) and XMP (xanthosine 5'-monophosphate), with the release of PPi. To a lesser extent, also acts on hypoxanthine. The polypeptide is Xanthine-guanine phosphoribosyltransferase (Vibrio cholerae serotype O1 (strain ATCC 39541 / Classical Ogawa 395 / O395)).